Here is a 238-residue protein sequence, read N- to C-terminus: Probable transcriptional regulatory protein VIBHAR_07036 (238 aa).

Belongs to the TACO1 family.

The protein localises to the cytoplasm. This chain is Probable transcriptional regulatory protein VIBHAR_07036, found in Vibrio campbellii (strain ATCC BAA-1116).